Reading from the N-terminus, the 222-residue chain is uncharacterized protein (222 aa).

The interval 142–222 is disordered; it reads ARRGGCVHPP…LPDPPSAGHL (81 aa). Over residues 160–169 the composition is skewed to low complexity; it reads QSRSISSRRA. Positions 182 to 196 are enriched in basic residues; that stretch reads PRRRPHRHRTRPQTR.

The protein belongs to the Rv1128c/1148c/1588c/1702c/1945/3466 family.

This is an uncharacterized protein from Mycobacterium tuberculosis (strain CDC 1551 / Oshkosh).